Consider the following 113-residue polypeptide: Thioredoxin H-type (113 aa).

In terms of domain architecture, Thioredoxin spans 2 to 112; the sequence is GGSVIVIDSK…LKALVAKHAA (111 aa). Residues C37 and C40 each act as nucleophile in the active site. Residues C37 and C40 are joined by a disulfide bond.

It belongs to the thioredoxin family. Plant H-type subfamily.

It localises to the cytoplasm. Functionally, participates in various redox reactions through the reversible oxidation of the active center dithiol to a disulfide. The H form is known to activate a number of cytosolic enzymes. The chain is Thioredoxin H-type (TRXH) from Chlamydomonas reinhardtii (Chlamydomonas smithii).